Here is a 512-residue protein sequence, read N- to C-terminus: Histidine ammonia-lyase (512 aa).

Positions alanine 146 to glycine 148 form a cross-link, 5-imidazolinone (Ala-Gly). 2,3-didehydroalanine (Ser) is present on serine 147.

This sequence belongs to the PAL/histidase family. Contains an active site 4-methylidene-imidazol-5-one (MIO), which is formed autocatalytically by cyclization and dehydration of residues Ala-Ser-Gly.

The protein resides in the cytoplasm. It catalyses the reaction L-histidine = trans-urocanate + NH4(+). Its pathway is amino-acid degradation; L-histidine degradation into L-glutamate; N-formimidoyl-L-glutamate from L-histidine: step 1/3. The sequence is that of Histidine ammonia-lyase from Paracidovorax citrulli (strain AAC00-1) (Acidovorax citrulli).